Here is a 135-residue protein sequence, read N- to C-terminus: ATP synthase epsilon chain 1 (135 aa).

This sequence belongs to the ATPase epsilon chain family. F-type ATPases have 2 components, CF(1) - the catalytic core - and CF(0) - the membrane proton channel. CF(1) has five subunits: alpha(3), beta(3), gamma(1), delta(1), epsilon(1). CF(0) has three main subunits: a, b and c.

It is found in the cell inner membrane. Functionally, produces ATP from ADP in the presence of a proton gradient across the membrane. The polypeptide is ATP synthase epsilon chain 1 (Nitrobacter hamburgensis (strain DSM 10229 / NCIMB 13809 / X14)).